The chain runs to 302 residues: Recombination-associated protein RdgC (302 aa).

This sequence belongs to the RdgC family.

It is found in the cytoplasm. It localises to the nucleoid. In terms of biological role, may be involved in recombination. This Psychromonas ingrahamii (strain DSM 17664 / CCUG 51855 / 37) protein is Recombination-associated protein RdgC.